The sequence spans 148 residues: 3-hydroxyacyl-[acyl-carrier-protein] dehydratase FabZ (148 aa).

His-48 is a catalytic residue.

This sequence belongs to the thioester dehydratase family. FabZ subfamily.

The protein localises to the cytoplasm. It catalyses the reaction a (3R)-hydroxyacyl-[ACP] = a (2E)-enoyl-[ACP] + H2O. In terms of biological role, involved in unsaturated fatty acids biosynthesis. Catalyzes the dehydration of short chain beta-hydroxyacyl-ACPs and long chain saturated and unsaturated beta-hydroxyacyl-ACPs. This chain is 3-hydroxyacyl-[acyl-carrier-protein] dehydratase FabZ, found in Nitratiruptor sp. (strain SB155-2).